Consider the following 434-residue polypeptide: MTVTDIATRTYNHGWRLDPIVRSLLDTDFYKLLMLQMIREFYPNEHVTFSVINRSRHVRLAEAIDEGELRAQLDHARSIRFSKNELIWLAGNTFYGKTQMFSPDFIDWLATFRLGEYELRKVDGQYELHFHGPWTHTTMWEIPALAILNELRSRQVTKGQGRFALDVLYARAKAKLWAKVERLRKLDDLWLSDFGTRRRHGFLWQRWCVEAAKEGLGPAFTGTSNVLLAMDNDLEAIGTNAHELPMVAAALADDDTALRRAPYRILDQWRHTYGGNLLVALPDAFGTQAFLRDAPEWVADWTGFRPDSLPPIAAGEEIIKWWKQKSRDPREKLLVFSDGMDVDSIEETYHHFAGRVRVSFGWGTNLTNDFVGCSPDGTVDLDPISIVCKVTSVNGRPAVKLSDNPEKATGEPSEIERYLRVFGSAGRVRAPVHV.

His-242 carries the phosphohistidine; by autocatalysis modification.

Belongs to the NAPRTase family. Transiently phosphorylated on a His residue during the reaction cycle. Phosphorylation strongly increases the affinity for substrates and increases the rate of nicotinate D-ribonucleotide production. Dephosphorylation regenerates the low-affinity form of the enzyme, leading to product release.

It carries out the reaction nicotinate + 5-phospho-alpha-D-ribose 1-diphosphate + ATP + H2O = nicotinate beta-D-ribonucleotide + ADP + phosphate + diphosphate. It participates in cofactor biosynthesis; NAD(+) biosynthesis; nicotinate D-ribonucleotide from nicotinate: step 1/1. In terms of biological role, catalyzes the synthesis of beta-nicotinate D-ribonucleotide from nicotinate and 5-phospho-D-ribose 1-phosphate at the expense of ATP. The protein is Nicotinate phosphoribosyltransferase of Nitrobacter hamburgensis (strain DSM 10229 / NCIMB 13809 / X14).